The following is a 205-amino-acid chain: MTTDFLFPKIADCSYVSCYCEENVWKLCEQVKRTRPEELGTCYAVFVSNEGRTVPLWRQKAGRGDDQVVIWDYHVFFMHNPSPNRCLVFDLDTTLPFPTYFHKYVTETFRSDLALRPEHHRFFRVIPADTYLIEFSSDRRHMRRPDGSWIKPPPSYPPILSNTNMHCLGDFICMSAGKGPGAVYSLSEFVHNFYKSPNMVAQHNK.

Residues cysteine 20, histidine 74, and aspartate 90 contribute to the active site.

This sequence belongs to the NTAQ1 family. As to quaternary structure, monomer.

The enzyme catalyses N-terminal L-glutaminyl-[protein] + H2O = N-terminal L-glutamyl-[protein] + NH4(+). Functionally, mediates the side-chain deamidation of N-terminal glutamine residues to glutamate, an important step in N-end rule pathway of protein degradation. Conversion of the resulting N-terminal glutamine to glutamate renders the protein susceptible to arginylation, polyubiquitination and degradation as specified by the N-end rule. Does not act on substrates with internal or C-terminal glutamine and does not act on non-glutamine residues in any position. The polypeptide is Protein N-terminal glutamine amidohydrolase (tun) (Drosophila pseudoobscura pseudoobscura (Fruit fly)).